Here is an 80-residue protein sequence, read N- to C-terminus: Large ribosomal subunit protein eL38 (80 aa).

Belongs to the eukaryotic ribosomal protein eL38 family. As to quaternary structure, component of the large ribosomal subunit (LSU). Mature N.crassa ribosomes consist of a small (40S) and a large (60S) subunit. The 40S small subunit contains 1 molecule of ribosomal RNA (18S rRNA) and at least 32 different proteins. The large 60S subunit contains 3 rRNA molecules (26S, 5.8S and 5S rRNA) and at least 42 different proteins.

Its subcellular location is the cytoplasm. Functionally, component of the ribosome, a large ribonucleoprotein complex responsible for the synthesis of proteins in the cell. The small ribosomal subunit (SSU) binds messenger RNAs (mRNAs) and translates the encoded message by selecting cognate aminoacyl-transfer RNA (tRNA) molecules. The large subunit (LSU) contains the ribosomal catalytic site termed the peptidyl transferase center (PTC), which catalyzes the formation of peptide bonds, thereby polymerizing the amino acids delivered by tRNAs into a polypeptide chain. The nascent polypeptides leave the ribosome through a tunnel in the LSU and interact with protein factors that function in enzymatic processing, targeting, and the membrane insertion of nascent chains at the exit of the ribosomal tunnel. This chain is Large ribosomal subunit protein eL38 (rpl-38), found in Neurospora crassa (strain ATCC 24698 / 74-OR23-1A / CBS 708.71 / DSM 1257 / FGSC 987).